The sequence spans 1121 residues: Piwi-like protein ergo-1 (1121 aa).

Residues 1–14 (MSYNNGGGGGGGGY) are compositionally biased toward gly residues. Residues 1 to 134 (MSYNNGGGGG…GNRGGGGGRV (134 aa)) form a disordered region. 2 stretches are compositionally biased toward basic and acidic residues: residues 15-29 (RNDR…DRQN) and 40-77 (YNDD…DRRG). Polar residues predominate over residues 99–112 (GSNQRNDNYGNNRG). Residues 125 to 134 (GNRGGGGGRV) show a composition bias toward gly residues. Residues 426-534 (VMTQILTKMT…MPLELVSYIV (109 aa)) enclose the PAZ domain. Positions 774 to 1081 (NVLKYLADNK…AAKRAKETLD (308 aa)) constitute a Piwi domain.

It belongs to the argonaute family. Piwi subfamily. As to quaternary structure, interacts with rde-12. Interacts with rde-10. Highly expressed in the germline in hermaphrodites.

Its subcellular location is the cytoplasm. Argonaute protein required for gene silencing in the endogenous RNA interference (RNAi) pathway. Involved in the 26G RNAi pathway and associates with both unmethylated and methylated 26G small interfering RNAs (26G-siRNAs), which are a class of 26 nucleotide siRNAs that possess a guanine residue at the 5'-end. Associated 26G-siRNAs are methylated by the methyltransferase henn-1, which stabilizes the siRNAs. Association with 26G-siRNAs is required for the biogenesis of secondary 22G-siRNAs (a class of 22 nucleotide siRNAs that possess a triphosphorylated guanine residue at the 5'-end). May be involved in passenger strand cleavage of target 26G-siRNAs. This is Piwi-like protein ergo-1 from Caenorhabditis elegans.